A 294-amino-acid chain; its full sequence is Pyridoxal 5'-phosphate synthase subunit PdxS (294 aa).

D24 lines the D-ribose 5-phosphate pocket. K81 (schiff-base intermediate with D-ribose 5-phosphate) is an active-site residue. G153 contributes to the D-ribose 5-phosphate binding site. Residue R165 participates in D-glyceraldehyde 3-phosphate binding. D-ribose 5-phosphate contacts are provided by residues G214 and G235–S236.

The protein belongs to the PdxS/SNZ family. In the presence of PdxT, forms a dodecamer of heterodimers.

The catalysed reaction is aldehydo-D-ribose 5-phosphate + D-glyceraldehyde 3-phosphate + L-glutamine = pyridoxal 5'-phosphate + L-glutamate + phosphate + 3 H2O + H(+). It functions in the pathway cofactor biosynthesis; pyridoxal 5'-phosphate biosynthesis. In terms of biological role, catalyzes the formation of pyridoxal 5'-phosphate from ribose 5-phosphate (RBP), glyceraldehyde 3-phosphate (G3P) and ammonia. The ammonia is provided by the PdxT subunit. Can also use ribulose 5-phosphate and dihydroxyacetone phosphate as substrates, resulting from enzyme-catalyzed isomerization of RBP and G3P, respectively. The chain is Pyridoxal 5'-phosphate synthase subunit PdxS from Geobacillus thermodenitrificans (strain NG80-2).